Reading from the N-terminus, the 142-residue chain is HTH-type transcriptional regulator MntR (142 aa).

Positions 1–63 (MTTPSMEDYI…YEKYRGLVLT (63 aa)) constitute an HTH dtxR-type domain. Cd(2+) is bound by residues aspartate 8, glutamate 11, histidine 77, glutamate 99, glutamate 102, and histidine 103. Mn(2+)-binding residues include aspartate 8, glutamate 11, histidine 77, glutamate 99, glutamate 102, and histidine 103.

Belongs to the DtxR/MntR family. In terms of assembly, homodimer.

It is found in the cytoplasm. Its activity is regulated as follows. DNA binding is strongly activated by Mn(2+) and Cd(2+), but it is poorly activated by non-cognate metal cations, including Co(2+), Fe(2+), Ni(2+), Ca(2+) and Zn(2+). In the strict absence of divalent transition metal ions, MntR has a low affinity for DNA. In terms of biological role, central regulator of manganese homeostasis that regulates the expression of both manganese uptake and efflux systems. In the presence of high levels of manganese, it mediates repression of the manganese uptake systems MntH and MntABCD and activation of the efflux systems MneP and MneS. Binds with high affinity to the regulatory regions of its target genes. The manganese concentration required for activation of efflux is higher than that for repression of uptake. The polypeptide is HTH-type transcriptional regulator MntR (Bacillus subtilis (strain 168)).